A 118-amino-acid chain; its full sequence is uncharacterized protein (118 aa).

The disordered stretch occupies residues 49–80 (SKEEHTTSAANLHPRKKKRMPPRRAEKNKAPN). Over residues 61-70 (HPRKKKRMPP) the composition is skewed to basic residues.

This is an uncharacterized protein from Saccharomyces cerevisiae (strain ATCC 204508 / S288c) (Baker's yeast).